The sequence spans 29 residues: Dermaseptin-S5 (29 aa).

This sequence belongs to the frog skin active peptide (FSAP) family. Dermaseptin subfamily. As to expression, expressed by the skin glands.

Its subcellular location is the secreted. Its function is as follows. Potent antimicrobial peptide with activity against bacteria and protozoa. Also has activity against fungi. Probably acts by disturbing membrane functions with its amphipathic structure. The polypeptide is Dermaseptin-S5 (Phyllomedusa sauvagei (Sauvage's leaf frog)).